Reading from the N-terminus, the 238-residue chain is NAD(P)H-hydrate epimerase (238 aa).

The YjeF N-terminal domain maps to 11–217; it reads AAALDKDLMS…EIHQKYNLQL (207 aa). Position 61-65 (61-65) interacts with (6S)-NADPHX; that stretch reads NNGGD. K(+) contacts are provided by Asn-62 and Asp-123. (6S)-NADPHX is bound by residues 127–133 and Asp-156; that span reads GFSFTGS. Ser-159 serves as a coordination point for K(+).

It belongs to the NnrE/AIBP family. K(+) serves as cofactor.

It localises to the cytoplasm. Its subcellular location is the mitochondrion. It carries out the reaction (6R)-NADHX = (6S)-NADHX. The catalysed reaction is (6R)-NADPHX = (6S)-NADPHX. Functionally, catalyzes the epimerization of the S- and R-forms of NAD(P)HX, a damaged form of NAD(P)H that is a result of enzymatic or heat-dependent hydration. This is a prerequisite for the S-specific NAD(P)H-hydrate dehydratase to allow the repair of both epimers of NAD(P)HX. The sequence is that of NAD(P)H-hydrate epimerase from Sclerotinia sclerotiorum (strain ATCC 18683 / 1980 / Ss-1) (White mold).